We begin with the raw amino-acid sequence, 359 residues long: Glycerol-1-phosphate dehydrogenase [NAD(P)+] (359 aa).

Residues 107–111 (GRVID) and 129–132 (TAAS) contribute to the NAD(+) site. Substrate is bound at residue D134. Residue S138 participates in NAD(+) binding. D181 contacts substrate. Zn(2+)-binding residues include D181 and H261. H265 is a binding site for substrate. A Zn(2+)-binding site is contributed by H277.

It belongs to the glycerol-1-phosphate dehydrogenase family. Requires Zn(2+) as cofactor.

The protein localises to the cytoplasm. The catalysed reaction is sn-glycerol 1-phosphate + NAD(+) = dihydroxyacetone phosphate + NADH + H(+). It catalyses the reaction sn-glycerol 1-phosphate + NADP(+) = dihydroxyacetone phosphate + NADPH + H(+). The protein operates within membrane lipid metabolism; glycerophospholipid metabolism. Functionally, catalyzes the NAD(P)H-dependent reduction of dihydroxyacetonephosphate (DHAP or glycerone phosphate) to glycerol 1-phosphate (G1P). The G1P thus generated is used as the glycerophosphate backbone of phospholipids in the cellular membranes of Archaea. In Methanosphaerula palustris (strain ATCC BAA-1556 / DSM 19958 / E1-9c), this protein is Glycerol-1-phosphate dehydrogenase [NAD(P)+].